The following is a 140-amino-acid chain: Large ribosomal subunit protein uL11 (140 aa).

This sequence belongs to the universal ribosomal protein uL11 family. In terms of assembly, part of the ribosomal stalk of the 50S ribosomal subunit. Interacts with L10 and the large rRNA to form the base of the stalk. L10 forms an elongated spine to which L12 dimers bind in a sequential fashion forming a multimeric L10(L12)X complex. In terms of processing, one or more lysine residues are methylated.

Its function is as follows. Forms part of the ribosomal stalk which helps the ribosome interact with GTP-bound translation factors. The sequence is that of Large ribosomal subunit protein uL11 from Caldanaerobacter subterraneus subsp. tengcongensis (strain DSM 15242 / JCM 11007 / NBRC 100824 / MB4) (Thermoanaerobacter tengcongensis).